Consider the following 331-residue polypeptide: Undecaprenyl-phosphate 4-deoxy-4-formamido-L-arabinose transferase (331 aa).

The next 2 membrane-spanning stretches (helical) occupy residues 236–256 and 270–290; these read LSIVGGGIASFGILFGLFLIL and VFPLFSILFIFIGAQFVGLGL.

This sequence belongs to the glycosyltransferase 2 family.

Its subcellular location is the cell inner membrane. The catalysed reaction is UDP-4-deoxy-4-formamido-beta-L-arabinose + di-trans,octa-cis-undecaprenyl phosphate = 4-deoxy-4-formamido-alpha-L-arabinopyranosyl di-trans,octa-cis-undecaprenyl phosphate + UDP. Its pathway is glycolipid biosynthesis; 4-amino-4-deoxy-alpha-L-arabinose undecaprenyl phosphate biosynthesis; 4-amino-4-deoxy-alpha-L-arabinose undecaprenyl phosphate from UDP-4-deoxy-4-formamido-beta-L-arabinose and undecaprenyl phosphate: step 1/2. It participates in bacterial outer membrane biogenesis; lipopolysaccharide biosynthesis. Catalyzes the transfer of 4-deoxy-4-formamido-L-arabinose from UDP to undecaprenyl phosphate. The modified arabinose is attached to lipid A and is required for resistance to polymyxin and cationic antimicrobial peptides. The protein is Undecaprenyl-phosphate 4-deoxy-4-formamido-L-arabinose transferase of Shewanella sediminis (strain HAW-EB3).